The sequence spans 215 residues: Adenylate kinase (215 aa).

10-15 (GAGKGT) is an ATP binding site. An NMP region spans residues 30–59 (STGDMFRAAMKNNTELGKKAKSFMDNGDLV). Residues Thr-31, Arg-36, 57-59 (DLV), 85-88 (GFPR), and Gln-92 each bind AMP. The interval 126 to 163 (GRWICRTCGKTYHEIYNPPKVPGKCDLDGGELYQREDD) is LID. Arg-127 serves as a coordination point for ATP. Zn(2+)-binding residues include Cys-130 and Cys-133. 136–137 (TY) is an ATP binding site. The Zn(2+) site is built by Cys-150 and Asp-153. AMP-binding residues include Arg-160 and Arg-171. Residue Gln-199 coordinates ATP.

The protein belongs to the adenylate kinase family. As to quaternary structure, monomer.

The protein resides in the cytoplasm. The enzyme catalyses AMP + ATP = 2 ADP. Its pathway is purine metabolism; AMP biosynthesis via salvage pathway; AMP from ADP: step 1/1. In terms of biological role, catalyzes the reversible transfer of the terminal phosphate group between ATP and AMP. Plays an important role in cellular energy homeostasis and in adenine nucleotide metabolism. The polypeptide is Adenylate kinase (Listeria innocua serovar 6a (strain ATCC BAA-680 / CLIP 11262)).